Consider the following 223-residue polypeptide: Triosephosphate isomerase (223 aa).

6-8 serves as a coordination point for substrate; sequence NLK. His86 (electrophile) is an active-site residue. Glu151 serves as the catalytic Proton acceptor. Positions 157 and 187 each coordinate substrate.

Belongs to the triosephosphate isomerase family. As to quaternary structure, homodimer.

The protein resides in the cytoplasm. It carries out the reaction D-glyceraldehyde 3-phosphate = dihydroxyacetone phosphate. The protein operates within carbohydrate biosynthesis; gluconeogenesis. It functions in the pathway carbohydrate degradation; glycolysis; D-glyceraldehyde 3-phosphate from glycerone phosphate: step 1/1. Involved in the gluconeogenesis. Catalyzes stereospecifically the conversion of dihydroxyacetone phosphate (DHAP) to D-glyceraldehyde-3-phosphate (G3P). The protein is Triosephosphate isomerase of Campylobacter jejuni subsp. jejuni serotype O:2 (strain ATCC 700819 / NCTC 11168).